The following is a 371-amino-acid chain: Queuine tRNA-ribosyltransferase (371 aa).

The active-site Proton acceptor is the aspartate 90. Substrate is bound by residues 90 to 94 (DSGGF), aspartate 144, glutamine 188, and glycine 215. The tract at residues 246 to 252 (GVGTPED) is RNA binding. Residue aspartate 265 is the Nucleophile of the active site. Positions 270–274 (TRNAR) are RNA binding; important for wobble base 34 recognition. Zn(2+)-binding residues include cysteine 303, cysteine 305, cysteine 308, and histidine 334.

This sequence belongs to the queuine tRNA-ribosyltransferase family. Homodimer. Within each dimer, one monomer is responsible for RNA recognition and catalysis, while the other monomer binds to the replacement base PreQ1. Zn(2+) serves as cofactor.

The enzyme catalyses 7-aminomethyl-7-carbaguanine + guanosine(34) in tRNA = 7-aminomethyl-7-carbaguanosine(34) in tRNA + guanine. The protein operates within tRNA modification; tRNA-queuosine biosynthesis. In terms of biological role, catalyzes the base-exchange of a guanine (G) residue with the queuine precursor 7-aminomethyl-7-deazaguanine (PreQ1) at position 34 (anticodon wobble position) in tRNAs with GU(N) anticodons (tRNA-Asp, -Asn, -His and -Tyr). Catalysis occurs through a double-displacement mechanism. The nucleophile active site attacks the C1' of nucleotide 34 to detach the guanine base from the RNA, forming a covalent enzyme-RNA intermediate. The proton acceptor active site deprotonates the incoming PreQ1, allowing a nucleophilic attack on the C1' of the ribose to form the product. After dissociation, two additional enzymatic reactions on the tRNA convert PreQ1 to queuine (Q), resulting in the hypermodified nucleoside queuosine (7-(((4,5-cis-dihydroxy-2-cyclopenten-1-yl)amino)methyl)-7-deazaguanosine). The chain is Queuine tRNA-ribosyltransferase from Neisseria meningitidis serogroup C / serotype 2a (strain ATCC 700532 / DSM 15464 / FAM18).